Reading from the N-terminus, the 72-residue chain is Translation initiation factor IF-1 (72 aa).

The S1-like domain maps to 1 to 72 (MSKEDSFEME…SKGRITYRAR (72 aa)).

Belongs to the IF-1 family. Component of the 30S ribosomal translation pre-initiation complex which assembles on the 30S ribosome in the order IF-2 and IF-3, IF-1 and N-formylmethionyl-tRNA(fMet); mRNA recruitment can occur at any time during PIC assembly.

It is found in the cytoplasm. One of the essential components for the initiation of protein synthesis. Stabilizes the binding of IF-2 and IF-3 on the 30S subunit to which N-formylmethionyl-tRNA(fMet) subsequently binds. Helps modulate mRNA selection, yielding the 30S pre-initiation complex (PIC). Upon addition of the 50S ribosomal subunit IF-1, IF-2 and IF-3 are released leaving the mature 70S translation initiation complex. This is Translation initiation factor IF-1 from Pseudomonas syringae pv. tomato (strain ATCC BAA-871 / DC3000).